The primary structure comprises 444 residues: ATP-dependent protease ATPase subunit HslU (444 aa).

ATP is bound by residues Ile-18 and 60–65 (GVGKTE). The interval 141–161 (DAWGNNEEGNNDSGTRQSFRK) is disordered. Over residues 147 to 157 (EEGNNDSGTRQ) the composition is skewed to polar residues. Positions 257, 322, and 394 each coordinate ATP.

Belongs to the ClpX chaperone family. HslU subfamily. In terms of assembly, a double ring-shaped homohexamer of HslV is capped on each side by a ring-shaped HslU homohexamer. The assembly of the HslU/HslV complex is dependent on binding of ATP.

It is found in the cytoplasm. In terms of biological role, ATPase subunit of a proteasome-like degradation complex; this subunit has chaperone activity. The binding of ATP and its subsequent hydrolysis by HslU are essential for unfolding of protein substrates subsequently hydrolyzed by HslV. HslU recognizes the N-terminal part of its protein substrates and unfolds these before they are guided to HslV for hydrolysis. The chain is ATP-dependent protease ATPase subunit HslU from Aliivibrio fischeri (strain ATCC 700601 / ES114) (Vibrio fischeri).